The chain runs to 122 residues: Small ribosomal subunit protein uS13 (122 aa).

The tract at residues 93 to 122 is disordered; that stretch reads RRGLPVRGQRTKTNARTRKGPKKTIAGKKK.

Belongs to the universal ribosomal protein uS13 family. Part of the 30S ribosomal subunit. Forms a loose heterodimer with protein S19. Forms two bridges to the 50S subunit in the 70S ribosome.

Its function is as follows. Located at the top of the head of the 30S subunit, it contacts several helices of the 16S rRNA. In the 70S ribosome it contacts the 23S rRNA (bridge B1a) and protein L5 of the 50S subunit (bridge B1b), connecting the 2 subunits; these bridges are implicated in subunit movement. Contacts the tRNAs in the A and P-sites. In Corynebacterium urealyticum (strain ATCC 43042 / DSM 7109), this protein is Small ribosomal subunit protein uS13.